The chain runs to 359 residues: Mitochondrial calcium uniporter regulator 1 (359 aa).

At 1-68 (MDCGSVGGQR…ARGGVSRASP (68 aa)) the chain is on the mitochondrial intermembrane side. The helical transmembrane segment at 69–85 (LLLLLLVPSPRLAAAAP) threads the bilayer. The Mitochondrial matrix portion of the chain corresponds to 86-338 (RRQLGDWERS…LESHKLDNIK (253 aa)). A coiled-coil region spans residues 235 to 310 (EKSEFSALRA…VALHAQQDRA (76 aa)). The chain crosses the membrane as a helical span at residues 339–358 (YLAGSIFTCLTVALGFYRLW). Residue Ile-359 is a topological domain, mitochondrial intermembrane.

It belongs to the CCDC90 family. Interacts (via coiled coil regions) with MCU; the interaction is direct. Interacts with SMDT1/EMRE; the interaction is direct. Interacts with PPIF. As to expression, ubiquitously expressed.

The protein localises to the mitochondrion inner membrane. In terms of biological role, key regulator of mitochondrial calcium uniporter (MCU) required for calcium entry into mitochondrion. Plays a direct role in uniporter-mediated calcium uptake via a direct interaction with MCU. Probably involved in the assembly of the membrane components of the uniporter complex (uniplex). The polypeptide is Mitochondrial calcium uniporter regulator 1 (Homo sapiens (Human)).